Here is a 369-residue protein sequence, read N- to C-terminus: Cobalt-precorrin-5B C(1)-methyltransferase (369 aa).

It belongs to the CbiD family.

It catalyses the reaction Co-precorrin-5B + S-adenosyl-L-methionine = Co-precorrin-6A + S-adenosyl-L-homocysteine. Its pathway is cofactor biosynthesis; adenosylcobalamin biosynthesis; cob(II)yrinate a,c-diamide from sirohydrochlorin (anaerobic route): step 6/10. In terms of biological role, catalyzes the methylation of C-1 in cobalt-precorrin-5B to form cobalt-precorrin-6A. The protein is Cobalt-precorrin-5B C(1)-methyltransferase of Leptospira borgpetersenii serovar Hardjo-bovis (strain JB197).